Here is a 124-residue protein sequence, read N- to C-terminus: Tax1-binding protein 3 homolog (124 aa).

The PDZ domain maps to 18 to 106 (AVELHKQEVI…DRAVKFIKQS (89 aa)).

In terms of biological role, may regulate a number of protein-protein interactions by competing for PDZ domain binding sites. In Caenorhabditis elegans, this protein is Tax1-binding protein 3 homolog.